A 191-amino-acid polypeptide reads, in one-letter code: Protein GrpE (191 aa).

The segment covering 1 to 15 (MGKEEKNNIEDKALD) has biased composition (basic and acidic residues). The interval 1 to 35 (MGKEEKNNIEDKALDNEQEMDQESTSKAVEELSIE) is disordered.

It belongs to the GrpE family. In terms of assembly, homodimer.

The protein localises to the cytoplasm. Participates actively in the response to hyperosmotic and heat shock by preventing the aggregation of stress-denatured proteins, in association with DnaK and GrpE. It is the nucleotide exchange factor for DnaK and may function as a thermosensor. Unfolded proteins bind initially to DnaJ; upon interaction with the DnaJ-bound protein, DnaK hydrolyzes its bound ATP, resulting in the formation of a stable complex. GrpE releases ADP from DnaK; ATP binding to DnaK triggers the release of the substrate protein, thus completing the reaction cycle. Several rounds of ATP-dependent interactions between DnaJ, DnaK and GrpE are required for fully efficient folding. The chain is Protein GrpE from Francisella philomiragia subsp. philomiragia (strain ATCC 25017 / CCUG 19701 / FSC 153 / O#319-036).